We begin with the raw amino-acid sequence, 607 residues long: NAD-dependent protein deacetylase sir-2.1 (607 aa).

The segment at 1–68 is disordered; the sequence is MSRDSGNDSE…SVSSESWQNN (68 aa). Residues 55 to 64 show a composition bias toward low complexity; it reads ESTTSVSSES. One can recognise a Deacetylase sirtuin-type domain in the interval 128-401; that stretch reads KLTNYNSLAD…DSIMEQQGKT (274 aa). NAD(+)-binding positions include 153–172 and 237–240; these read GAGV…DGIY and QNID. H255 (proton acceptor) is an active-site residue. The Zn(2+) site is built by C263, C266, C287, and C290. Residues 327-329, 352-354, and C369 each bind NAD(+); these read GSS and NRE. Residues 426–453 are disordered; it reads EKRNDDSSDEPTLKKPRMSVADDSMDSE.

This sequence belongs to the sirtuin family. Class I subfamily. As to quaternary structure, interacts with ftt-2 and par-5. Interacts with daf-16 following heat-shock, which causes daf-16 to accumulate in the nucleus. Interaction with daf-16 is promoted by ftt-2. Interacts with transcriptional coregulator hcf-1. The cofactor is Zn(2+).

The protein resides in the nucleus. It localises to the cytoplasm. The enzyme catalyses N(6)-acetyl-L-lysyl-[protein] + NAD(+) + H2O = 2''-O-acetyl-ADP-D-ribose + nicotinamide + L-lysyl-[protein]. Its function is as follows. NAD-dependent deacetylase. Involved in metabolism, apoptosis, response to oxidative stress, response to DNA damage, and determination of lifespan. Required for a reduction of the 'Lys-16' acetylation of histone H4 (H4K16ac) on dosage-compensated X chromosomes in hermaphrodites. Plays a role in germ cell and somatic cell apoptosis in response to DNA damage. Functions upstream of daf-16/Forkhead box protein O in the Insulin/IGF-1-like signaling (IIS) mediated pathway, promoting daf-16 mediated transcriptional activation and increased lifespan. May also regulate lifespan independently of daf-16 by modulating the transcription of genes involved in the stress response of the endoplasmic reticulum (ER). Functions upstream of transcriptional coregulator hcf-1, perhaps acting independently of the IIS mediated pathway, to modulate lifespan and oxidative stress response. Acts upstream of the nicotinic acid metabolism pathway, which may be linked to the regulation of longevity. Plays a role in ascaroside-mediated longevity and stress resistance. This chain is NAD-dependent protein deacetylase sir-2.1, found in Caenorhabditis elegans.